A 646-amino-acid polypeptide reads, in one-letter code: Long-chain fatty acid transport protein 1 (646 aa).

Over 1–13 (MRAPGAGTASVAS) the chain is Extracellular. A helical transmembrane segment spans residues 14–34 (LALLWFLGLPWTWSAAAAFCV). The Cytoplasmic segment spans residues 35 to 646 (YVGGGGWRFL…ARICAGDFSL (612 aa)). Residues 191-475 (EVSEQLGKSL…YVSDSATNKK (285 aa)) form a sufficient for oligomerization region. 246–257 (YIYTSGTTGLPK) serves as a coordination point for AMP.

Belongs to the ATP-dependent AMP-binding enzyme family. As to quaternary structure, self-associates. May function as a homodimer. Interacts with EPRS1; mediates the translocation of SLC27A1 from the cytoplasm to the plasma membrane thereby increasing the uptake of long-chain fatty acids. Interacts with DGAT2 and this interaction is enhanced in the presence of ZFYVE1. As to expression, higher expression in white adipose tissue than in heart. Highest expression in skeletal muscle, heart and fat. Lower levels in brain, kidney, lung, liver and testis. No expression in spleen or intestine.

The protein localises to the cell membrane. The protein resides in the mitochondrion outer membrane. It is found in the endomembrane system. Its subcellular location is the cytoplasm. It catalyses the reaction a fatty acid(in) = a fatty acid(out). The catalysed reaction is (9Z)-octadecenoate(out) = (9Z)-octadecenoate(in). The enzyme catalyses hexadecanoate(out) = hexadecanoate(in). It carries out the reaction (5Z,8Z,11Z,14Z)-eicosatetraenoate(out) = (5Z,8Z,11Z,14Z)-eicosatetraenoate(in). It catalyses the reaction (9Z,12Z)-octadecadienoate(out) = (9Z,12Z)-octadecadienoate(in). The catalysed reaction is a long-chain fatty acid + ATP + CoA = a long-chain fatty acyl-CoA + AMP + diphosphate. The enzyme catalyses (5Z,8Z,11Z,14Z)-eicosatetraenoate + ATP + CoA = (5Z,8Z,11Z,14Z)-eicosatetraenoyl-CoA + AMP + diphosphate. It carries out the reaction a very long-chain fatty acid + ATP + CoA = a very long-chain fatty acyl-CoA + AMP + diphosphate. It catalyses the reaction tetracosanoate + ATP + CoA = tetracosanoyl-CoA + AMP + diphosphate. With respect to regulation, inhibited by Triacsin C. Both insulin and muscle contraction stimulate translocation to the plasma membrane in muscle, increasing fatty acid transport activity. Functionally, mediates the import of long-chain fatty acids (LCFA) into the cell by facilitating their transport at the plasma membrane. Also functions as an acyl-CoA ligase catalyzing the ATP-dependent formation of fatty acyl-CoA using LCFA and very-long-chain fatty acids (VLCFA) as substrates, which prevents fatty acid efflux from cells and might drive more fatty acid uptake. May act directly as a bona fide transporter, or alternatively, in a cytoplasmic or membrane-associated multimeric protein complex to trap and draw fatty acids towards accumulation. Plays a pivotal role in regulating available LCFA substrates from exogenous sources in tissues undergoing high levels of beta-oxidation or triglyceride synthesis. May be involved in regulation of cholesterol metabolism. Probably involved in fatty acid transport across the blood barrier. This is Long-chain fatty acid transport protein 1 from Mus musculus (Mouse).